The chain runs to 348 residues: Ion-translocating oxidoreductase complex subunit D (348 aa).

A run of 3 helical transmembrane segments spans residues 20 to 39 (VMRL…CYLF), 67 to 87 (YVVS…LIAV), and 124 to 144 (AMVG…NWMA). Thr-187 is subject to FMN phosphoryl threonine. The next 4 helical transmembrane spans lie at 221–241 (WINL…LIPW), 244–264 (PVAM…LAPA), 266–286 (FAMP…FFII), and 300–320 (LVFG…GGYP).

It belongs to the NqrB/RnfD family. In terms of assembly, the complex is composed of six subunits: RnfA, RnfB, RnfC, RnfD, RnfE and RnfG. Requires FMN as cofactor.

Its subcellular location is the cell inner membrane. Functionally, part of a membrane-bound complex that couples electron transfer with translocation of ions across the membrane. In Tolumonas auensis (strain DSM 9187 / NBRC 110442 / TA 4), this protein is Ion-translocating oxidoreductase complex subunit D.